Reading from the N-terminus, the 207-residue chain is MIGMLKGRVESVDTSNAVVDVHGVGFELRMPSNDLTAMHMGQDVKIYTSMSVSQDAITLFGFLDARSKRMFLQLQKVSGVGPKVALSLLSTLAPDDLAQAIHDGDDKALSRAPGLGRKGAQKIILELKGSIDVDKIETGEPTSTQRIPTDKGVEQVVEGLMSLGWKQADAQQAVDSVISSSGIALPLEEGNVPTVLRLALTSLDRGR.

The tract at residues 1–63 (MIGMLKGRVE…QDAITLFGFL (63 aa)) is domain I. The domain II stretch occupies residues 64–142 (DARSKRMFLQ…VDKIETGEPT (79 aa)). The segment at 143 to 153 (STQRIPTDKGV) is flexible linker. A domain III region spans residues 153-207 (VEQVVEGLMSLGWKQADAQQAVDSVISSSGIALPLEEGNVPTVLRLALTSLDRGR).

This sequence belongs to the RuvA family. Homotetramer. Forms an RuvA(8)-RuvB(12)-Holliday junction (HJ) complex. HJ DNA is sandwiched between 2 RuvA tetramers; dsDNA enters through RuvA and exits via RuvB. An RuvB hexamer assembles on each DNA strand where it exits the tetramer. Each RuvB hexamer is contacted by two RuvA subunits (via domain III) on 2 adjacent RuvB subunits; this complex drives branch migration. In the full resolvosome a probable DNA-RuvA(4)-RuvB(12)-RuvC(2) complex forms which resolves the HJ.

Its subcellular location is the cytoplasm. In terms of biological role, the RuvA-RuvB-RuvC complex processes Holliday junction (HJ) DNA during genetic recombination and DNA repair, while the RuvA-RuvB complex plays an important role in the rescue of blocked DNA replication forks via replication fork reversal (RFR). RuvA specifically binds to HJ cruciform DNA, conferring on it an open structure. The RuvB hexamer acts as an ATP-dependent pump, pulling dsDNA into and through the RuvAB complex. HJ branch migration allows RuvC to scan DNA until it finds its consensus sequence, where it cleaves and resolves the cruciform DNA. The polypeptide is Holliday junction branch migration complex subunit RuvA (Bifidobacterium animalis subsp. lactis (strain AD011)).